We begin with the raw amino-acid sequence, 445 residues long: Probable multidrug resistance protein YpnP (445 aa).

12 consecutive transmembrane segments (helical) span residues 15–35 (LVLF…FQFI), 49–69 (LGAA…ILGL), 95–115 (AFVV…FFLS), 136–156 (LQIQ…STVL), 168–188 (FIAF…SVFR), 194–214 (AAYS…FYVI), 240–260 (IPAG…MSVV), 277–297 (LDSI…SMAG), 314–334 (LGVI…WVFG), 355–375 (LKWI…NGIV), 384–404 (VLVL…ALFS), and 411–431 (GIGL…FLYY).

The protein belongs to the multi antimicrobial extrusion (MATE) (TC 2.A.66.1) family.

The protein localises to the cell membrane. This Bacillus subtilis (strain 168) protein is Probable multidrug resistance protein YpnP (ypnP).